Here is a 205-residue protein sequence, read N- to C-terminus: Small ribosomal subunit protein uS4 (205 aa).

The interval 1-46 is disordered; that stretch reads MSKRHSAKYKIDRRMGENLWGRPKSPVNQRSYGPGQHGQRRKQKVS. Residues 94 to 154 enclose the S4 RNA-binding domain; sequence SRLDAIVYRA…EKSRNMALVL (61 aa).

The protein belongs to the universal ribosomal protein uS4 family. Part of the 30S ribosomal subunit. Contacts protein S5. The interaction surface between S4 and S5 is involved in control of translational fidelity.

Functionally, one of the primary rRNA binding proteins, it binds directly to 16S rRNA where it nucleates assembly of the body of the 30S subunit. In terms of biological role, with S5 and S12 plays an important role in translational accuracy. This is Small ribosomal subunit protein uS4 from Caulobacter sp. (strain K31).